Here is an 851-residue protein sequence, read N- to C-terminus: Protein BCK2 (851 aa).

The span at 1–10 shows a compositional bias: basic residues; that stretch reads MPKNSHHHRS. Disordered stretches follow at residues 1-91, 233-271, 315-355, 466-504, and 698-722; these read MPKN…RKKS, EVVP…MNTK, SLSL…LPEE, FLDG…YITT, and HASR…PNNV. The segment covering 11-23 has biased composition (low complexity); sequence SSVNSTKSRSTES. Residues 37-66 are compositionally biased toward polar residues; sequence ASGSTQASPDRNSSTGSCSTPVLPTMNVMS. The segment covering 71 to 81 has biased composition (basic and acidic residues); the sequence is VLLEDPRDNHT. 4 stretches are compositionally biased toward polar residues: residues 254–271, 334–349, 489–504, and 702–722; these read SETN…MNTK, SPRT…SQSK, ISDA…YITT, and SESN…PNNV. Serine 334 carries the post-translational modification Phosphoserine. Serine 757 and serine 761 each carry phosphoserine.

In terms of biological role, dosage dependent suppressor of PKC1 deletion and MPK1 deletion. Involved in cell lysis. The chain is Protein BCK2 (BCK2) from Saccharomyces cerevisiae (strain ATCC 204508 / S288c) (Baker's yeast).